Here is a 309-residue protein sequence, read N- to C-terminus: Oxygen-dependent coproporphyrinogen-III oxidase (309 aa).

Position 94 (serine 94) interacts with substrate. Residues histidine 98 and histidine 108 each coordinate a divalent metal cation. Histidine 108 serves as the catalytic Proton donor. Position 110–112 (110–112) interacts with substrate; sequence NVR. A divalent metal cation-binding residues include histidine 147 and histidine 177. The segment at 242–277 is important for dimerization; sequence YVEFNLVWDRGTLFGLQTGGRTESILMSLPPLVRWE. Residue 260–262 participates in substrate binding; the sequence is GGR.

This sequence belongs to the aerobic coproporphyrinogen-III oxidase family. Homodimer. It depends on a divalent metal cation as a cofactor.

It localises to the cytoplasm. It catalyses the reaction coproporphyrinogen III + O2 + 2 H(+) = protoporphyrinogen IX + 2 CO2 + 2 H2O. The protein operates within porphyrin-containing compound metabolism; protoporphyrin-IX biosynthesis; protoporphyrinogen-IX from coproporphyrinogen-III (O2 route): step 1/1. In terms of biological role, involved in the heme biosynthesis. Catalyzes the aerobic oxidative decarboxylation of propionate groups of rings A and B of coproporphyrinogen-III to yield the vinyl groups in protoporphyrinogen-IX. The sequence is that of Oxygen-dependent coproporphyrinogen-III oxidase from Yersinia pseudotuberculosis serotype O:1b (strain IP 31758).